A 327-amino-acid polypeptide reads, in one-letter code: tRNA U34 carboxymethyltransferase (327 aa).

Residues lysine 91, tryptophan 105, lysine 110, glycine 130, 181–182, methionine 196, tyrosine 200, and arginine 315 contribute to the carboxy-S-adenosyl-L-methionine site; that span reads IE.

This sequence belongs to the class I-like SAM-binding methyltransferase superfamily. CmoB family. As to quaternary structure, homotetramer.

It catalyses the reaction carboxy-S-adenosyl-L-methionine + 5-hydroxyuridine(34) in tRNA = 5-carboxymethoxyuridine(34) in tRNA + S-adenosyl-L-homocysteine + H(+). In terms of biological role, catalyzes carboxymethyl transfer from carboxy-S-adenosyl-L-methionine (Cx-SAM) to 5-hydroxyuridine (ho5U) to form 5-carboxymethoxyuridine (cmo5U) at position 34 in tRNAs. This is tRNA U34 carboxymethyltransferase from Pectobacterium atrosepticum (strain SCRI 1043 / ATCC BAA-672) (Erwinia carotovora subsp. atroseptica).